The sequence spans 349 residues: Protein BPS1, chloroplastic (349 aa).

The transit peptide at 1-43 (MARPQDPPRGFFPFGNPFKNLSSKNSVLSSKLLPLLNNFETNL) directs the protein to the chloroplast.

As to expression, expressed in roots, hypocotyls, cotyledons, leaves, flowers and siliques.

Its subcellular location is the plastid. It localises to the chloroplast. Required for normal root and shoot development. Prevents constitutive production of a root mobile carotenoid-derived signaling compound that is capable of arresting shoot and leaf development. This is Protein BPS1, chloroplastic from Arabidopsis thaliana (Mouse-ear cress).